Reading from the N-terminus, the 839-residue chain is Protein translocase subunit SecA (839 aa).

ATP contacts are provided by residues Q86, 104–108, and D493; that span reads GEGKT. Residues 794–839 form a disordered region; the sequence is GIDMDNLQTSGPSDRPDPETSGDADPKNRAQRRAQEQERKRQNKKQ. The span at 807 to 833 shows a compositional bias: basic and acidic residues; the sequence is DRPDPETSGDADPKNRAQRRAQEQERK.

It belongs to the SecA family. In terms of assembly, monomer and homodimer. Part of the essential Sec protein translocation apparatus which comprises SecA, SecYEG and auxiliary proteins SecDF. Other proteins may also be involved.

It is found in the cell membrane. Its subcellular location is the cytoplasm. The enzyme catalyses ATP + H2O + cellular proteinSide 1 = ADP + phosphate + cellular proteinSide 2.. In terms of biological role, part of the Sec protein translocase complex. Interacts with the SecYEG preprotein conducting channel. Has a central role in coupling the hydrolysis of ATP to the transfer of proteins into and across the cell membrane, serving as an ATP-driven molecular motor driving the stepwise translocation of polypeptide chains across the membrane. In Brevibacillus brevis (strain 47 / JCM 6285 / NBRC 100599), this protein is Protein translocase subunit SecA.